We begin with the raw amino-acid sequence, 62 residues long: Conotoxin Lt5.8 (62 aa).

Residues 1 to 19 (MLCLPVFIILLLLVSPAAT) form the signal peptide. The propeptide occupies 20–47 (MPVDLEILKAPTKESRKDFEMRIELLRS). Q50 bears the Pyrrolidone carboxylic acid mark. Position 61 is a glutamine amide (Q61).

It belongs to the conotoxin T superfamily. Post-translationally, contains 2 disulfide bonds that can be either 'C1-C3, C2-C4' or 'C1-C4, C2-C3', since these disulfide connectivities have been observed for conotoxins with cysteine framework V (for examples, see AC P0DQQ7 and AC P81755). As to expression, expressed by the venom duct.

Its subcellular location is the secreted. The sequence is that of Conotoxin Lt5.8 from Conus litteratus (Lettered cone).